We begin with the raw amino-acid sequence, 391 residues long: Small ribosomal subunit protein bS1 (391 aa).

S1 motif domains lie at 16 to 90 (GDKV…LSRR), 108 to 173 (NEII…LSRK), 194 to 262 (GDVI…LSIK), and 279 to 348 (NDVI…LSIK).

It belongs to the bacterial ribosomal protein bS1 family.

Functionally, binds mRNA; thus facilitating recognition of the initiation point. It is needed to translate mRNA with a short Shine-Dalgarno (SD) purine-rich sequence. The sequence is that of Small ribosomal subunit protein bS1 (rpsA) from Staphylococcus aureus (strain MSSA476).